The sequence spans 467 residues: Cytochrome P450 76A1 (467 aa).

Position 410 (C410) interacts with heme.

The protein belongs to the cytochrome P450 family. Requires heme as cofactor.

This chain is Cytochrome P450 76A1 (CYP76A1), found in Solanum melongena (Eggplant).